Consider the following 94-residue polypeptide: Small ribosomal subunit protein bS6 (94 aa).

It belongs to the bacterial ribosomal protein bS6 family.

Binds together with bS18 to 16S ribosomal RNA. This chain is Small ribosomal subunit protein bS6, found in Clostridium botulinum (strain Hall / ATCC 3502 / NCTC 13319 / Type A).